The chain runs to 92 residues: Phosphoribosyl-ATP pyrophosphatase (92 aa).

It belongs to the PRA-PH family.

It is found in the cytoplasm. The catalysed reaction is 1-(5-phospho-beta-D-ribosyl)-ATP + H2O = 1-(5-phospho-beta-D-ribosyl)-5'-AMP + diphosphate + H(+). It functions in the pathway amino-acid biosynthesis; L-histidine biosynthesis; L-histidine from 5-phospho-alpha-D-ribose 1-diphosphate: step 2/9. The polypeptide is Phosphoribosyl-ATP pyrophosphatase (Leptospira interrogans serogroup Icterohaemorrhagiae serovar copenhageni (strain Fiocruz L1-130)).